The primary structure comprises 1433 residues: Regulatory protein CAT8 (1433 aa).

A compositionally biased stretch (polar residues) spans 20-38 (GSQALSGPSISNRTSSSEA). The interval 20–40 (GSQALSGPSISNRTSSSEANP) is disordered. A DNA-binding region (zn(2)-C6 fungal-type) is located at residues 70–97 (CDRCRSKKTRCDGKRPQCSQCAAVGFEC). Over residues 936-946 (KPLFGSQSKNS) the composition is skewed to polar residues. Disordered stretches follow at residues 936 to 1024 (KPLF…DTKK), 1137 to 1162 (QNPENSKNNQFHQKGKSTNMEKNNLS), 1200 to 1236 (SASADPGTNKKAVTNAGANFKPPSTGSNTSQGSILGS), and 1324 to 1433 (LNPT…QNAK). Basic and acidic residues-rich tracts occupy residues 947-965 (LENRQRTPNVKRENPEHEY) and 994-1005 (LKYEKDAKRNAK). 3 stretches are compositionally biased toward polar residues: residues 1138–1162 (NPENSKNNQFHQKGKSTNMEKNNLS), 1221–1235 (PPSTGSNTSQGSILG), and 1326–1348 (PTDSILSQGMVSSVSTRNTSNQR). Residues 1349 to 1362 (SLSSGNDSKGDSSS) show a composition bias toward low complexity. Polar residues-rich tracts occupy residues 1363-1391 (QENSKSATGNQLDTPSTLFQMRRTSSGPS) and 1418-1433 (SNTDNVSDLFQWQNAK).

Post-translationally, could be the target of the SNF1/CAT1 - SNF4/CAT3 kinase complex.

The protein resides in the nucleus. Activator of the gluconeogenic enzymes FBP1 and PCK1 genes. The chain is Regulatory protein CAT8 (CAT8) from Saccharomyces cerevisiae (strain ATCC 204508 / S288c) (Baker's yeast).